The following is a 1107-amino-acid chain: Protein translocase subunit SecA (1107 aa).

ATP-binding positions include Q169, 187–191 (GEGKT), and D688. The segment covering 1036 to 1066 (RHAAEQRTDMSKYRTQKDDIEAQQKAQRDAA) has biased composition (basic and acidic residues). The disordered stretch occupies residues 1036–1107 (RHAAEQRTDM…KFKQCHGRNL (72 aa)). Residues C1091, C1093, C1102, and H1103 each coordinate Zn(2+). The span at 1097–1107 (KKFKQCHGRNL) shows a compositional bias: basic residues.

The protein belongs to the SecA family. As to quaternary structure, monomer and homodimer. Part of the essential Sec protein translocation apparatus which comprises SecA, SecYEG and auxiliary proteins SecDF. Other proteins may also be involved. Zn(2+) is required as a cofactor.

It localises to the cell inner membrane. It is found in the cytoplasm. The enzyme catalyses ATP + H2O + cellular proteinSide 1 = ADP + phosphate + cellular proteinSide 2.. Functionally, part of the Sec protein translocase complex. Interacts with the SecYEG preprotein conducting channel. Has a central role in coupling the hydrolysis of ATP to the transfer of proteins into and across the cell membrane, serving as an ATP-driven molecular motor driving the stepwise translocation of polypeptide chains across the membrane. The protein is Protein translocase subunit SecA of Porphyromonas gingivalis (strain ATCC BAA-308 / W83).